A 374-amino-acid polypeptide reads, in one-letter code: Glutamine synthetase (374 aa).

The required for glutamine-induced ubiquitination by CRL4(CRBN) and proteasomal degradation stretch occupies residues 2-25 (TTSASSHLNKGIKQVYMSLPQGEK). An N6-acetyllysine mark is found at Lys11 and Lys14. The GS beta-grasp domain maps to 24–106 (EKVQAMYIWI…VLCESFQVQF (83 aa)). The region spanning 114–374 (LRHTCKRIMD…TGDEPFQYKN (261 aa)) is the GS catalytic domain. Glu135 provides a ligand contact to ATP. Glu135, Glu137, Glu197, and Glu204 together coordinate Mn(2+). Residue 204–209 (EFQIGP) participates in ATP binding. Residue 247–248 (NW) participates in L-glutamate binding. His254 is a binding site for Mn(2+). ATP-binding positions include 256-258 (NFS), Arg320, and Arg325. Position 320 (Arg320) interacts with L-glutamate. ADP is bound at residue 337 to 339 (YFE). Residue Glu339 participates in Mn(2+) binding. An L-glutamate-binding site is contributed by Arg341. Ser344 carries the phosphoserine modification.

This sequence belongs to the glutamine synthetase family. Decamer; composed of two pentamers. Interacts with PALMD. Interacts with RHOJ. Interacts with BEST2; this interaction tethers a fraction of GLUL to the membrane, causing a decrease of cytosolic glutamine synthase (GS) activity and inhibits the chloride channel activity of BEST2 by affecting the gating at the aperture in the absence of intracellular glutamate. Mg(2+) serves as cofactor. Requires Mn(2+) as cofactor. In terms of processing, palmitoylated; undergoes autopalmitoylation. Acetylated by EP300/p300; acetylation is stimulated by increased glutamine levels and promotes ubiquitin-mediated proteasomal degradation. Post-translationally, ubiquitinated by ZNRF1. Ubiquitinated by the DCX (DDB1-CUL4-X-box) E3 ubiquitin-protein ligase complex called CRL4(CRBN), leading to proteasomal degradation.

Its subcellular location is the cytoplasm. It localises to the cytosol. It is found in the microsome. The protein localises to the mitochondrion. The protein resides in the cell membrane. It carries out the reaction L-glutamate + NH4(+) + ATP = L-glutamine + ADP + phosphate + H(+). The catalysed reaction is L-cysteinyl-[protein] + hexadecanoyl-CoA = S-hexadecanoyl-L-cysteinyl-[protein] + CoA. Its activity is regulated as follows. Glutamine synthetase activity is inhibited by methionine sulfoximine (MSO). Glutamine synthetase that catalyzes the ATP-dependent conversion of glutamate and ammonia to glutamine. Its role depends on tissue localization: in the brain, it regulates the levels of toxic ammonia and converts neurotoxic glutamate to harmless glutamine, whereas in the liver, it is one of the enzymes responsible for the removal of ammonia. Plays a key role in ammonium detoxification during erythropoiesis: the glutamine synthetase activity is required to remove ammonium generated by porphobilinogen deaminase (HMBS) during heme biosynthesis to prevent ammonium accumulation and oxidative stress. Essential for proliferation of fetal skin fibroblasts. Independently of its glutamine synthetase activity, required for endothelial cell migration during vascular development. Involved in angiogenesis by regulating membrane localization and activation of the GTPase RHOJ, possibly by promoting RHOJ palmitoylation. May act as a palmitoyltransferase for RHOJ: able to autopalmitoylate and then transfer the palmitoyl group to RHOJ. Plays a role in ribosomal 40S subunit biogenesis. Through the interaction with BEST2, inhibits BEST2 channel activity by affecting the gating at the aperture in the absence of intracellular L-glutamate, but sensitizes BEST2 to intracellular L-glutamate, which promotes the opening of BEST2 and thus relieves its inhibitory effect on BEST2. This chain is Glutamine synthetase, found in Macaca fascicularis (Crab-eating macaque).